The primary structure comprises 237 residues: Dihydroceramide fatty acyl 2-hydroxylase FAH2 (237 aa).

2 helical membrane passes run 54–74 and 77–97; these read VWWA…SISA and GLTF…WTLL. Residues His-102, His-107, His-123, His-126, and His-127 each contribute to the Zn(2+) site. The next 2 membrane-spanning stretches (helical) occupy residues 134–154 and 156–176; these read LRLV…WKLL and LLAT…GYVM. The Zn(2+) site is built by His-181, His-185, His-201, His-204, and His-205.

The protein belongs to the sterol desaturase family. In terms of assembly, interacts with CYTB5-A, CYTB5-B, CYTB5-C and CYTB5-D. It depends on Zn(2+) as a cofactor. As to expression, expressed in leaves, roots, flowers and seeds.

It localises to the endoplasmic reticulum membrane. It catalyses the reaction an N-(1,2-saturated acyl)sphinganine + 2 Fe(II)-[cytochrome b5] + O2 + 2 H(+) = an N-[(2'R)-hydroxyacyl]sphinganine + 2 Fe(III)-[cytochrome b5] + H2O. Fatty acid 2-hydroxylase involved in the alpha-hydroxylation of the long-chain fatty acid (LCFA) palmitic acid. Probably involved in the resistance response to oxidative stress. The sequence is that of Dihydroceramide fatty acyl 2-hydroxylase FAH2 from Arabidopsis thaliana (Mouse-ear cress).